A 551-amino-acid chain; its full sequence is Tetrachloroethene reductive dehalogenase (551 aa).

The segment at residues 1-39 is a signal peptide (tat-type signal); it reads MGEINRRNFLKVSILGAAAAAVASASAVKGMVSPLVADA. Positions 411–440 constitute a 4Fe-4S ferredoxin-type 1 domain; it reads PRKFGVREFCRLCKKCADACPAQAISHEKD. Residues C420, C423, C426, C430, C467, C478, C481, and C485 each contribute to the [4Fe-4S] cluster site. A 4Fe-4S ferredoxin-type 2 domain is found at 478-496; it reads CSNCVAVCSWNKVETWNHD.

It belongs to the PceA family. It depends on [4Fe-4S] cluster as a cofactor. Corrinoid serves as cofactor. Post-translationally, predicted to be exported by the Tat system. The position of the signal peptide cleavage has not been experimentally proven.

It localises to the cell membrane. The catalysed reaction is trichloroethene + chloride + A + H(+) = tetrachloroethene + AH2. The enzyme catalyses trichloroethene + AH2 = (Z)-1,2-dichloroethene + chloride + A + H(+). Functionally, catalyzes the reductive dechlorination of tetrachloroethene (PCE) to trichloroethene (TCE) and of trichloroethene to cis-1,2-dichloroethene (DCE). In Desulfitobacterium hafniense (Desulfitobacterium frappieri), this protein is Tetrachloroethene reductive dehalogenase.